The sequence spans 779 residues: Endonuclease MutS2 (779 aa).

328 to 335 (GPNTGGKT) serves as a coordination point for ATP. The 76-residue stretch at 704-779 (LDLRGKRYEE…GSGATIVTLG (76 aa)) folds into the Smr domain.

The protein belongs to the DNA mismatch repair MutS family. MutS2 subfamily. As to quaternary structure, homodimer. Binds to stalled ribosomes, contacting rRNA.

Endonuclease that is involved in the suppression of homologous recombination and thus may have a key role in the control of bacterial genetic diversity. Its function is as follows. Acts as a ribosome collision sensor, splitting the ribosome into its 2 subunits. Detects stalled/collided 70S ribosomes which it binds and splits by an ATP-hydrolysis driven conformational change. Acts upstream of the ribosome quality control system (RQC), a ribosome-associated complex that mediates the extraction of incompletely synthesized nascent chains from stalled ribosomes and their subsequent degradation. Probably generates substrates for RQC. This Streptococcus pyogenes serotype M18 (strain MGAS8232) protein is Endonuclease MutS2.